Consider the following 381-residue polypeptide: Creatine kinase M-type (381 aa).

Positions 11 to 98 (KLNYKPEEEY…FDPIISDRHG (88 aa)) constitute a Phosphagen kinase N-terminal domain. Residues 125–367 (YVLSSRVRTG…KLMVEMEKKL (243 aa)) form the Phosphagen kinase C-terminal domain. 128-132 (SSRVR) contributes to the ATP binding site. Ser164 is subject to Phosphoserine. Phosphothreonine is present on Thr166. A Phosphoserine modification is found at Ser178. At Thr180 the chain carries Phosphothreonine. His191 serves as a coordination point for ATP. The residue at position 199 (Ser199) is a Phosphoserine. Residues Arg236 and Arg292 each contribute to the ATP site. Thr313 and Thr322 each carry phosphothreonine. ATP contacts are provided by residues 320–325 (RGTGGV) and Asp335. Ser372 bears the Phosphoserine mark.

The protein belongs to the ATP:guanido phosphotransferase family. As to quaternary structure, dimer of identical or non-identical chains, which can be either B (brain type) or M (muscle type). With MM being the major form in skeletal muscle and myocardium, MB existing in myocardium, and BB existing in many tissues, especially brain.

It is found in the cytoplasm. The enzyme catalyses creatine + ATP = N-phosphocreatine + ADP + H(+). Functionally, reversibly catalyzes the transfer of phosphate between ATP and various phosphogens (e.g. creatine phosphate). Creatine kinase isoenzymes play a central role in energy transduction in tissues with large, fluctuating energy demands, such as skeletal muscle, heart, brain and spermatozoa. This chain is Creatine kinase M-type (CKM), found in Homo sapiens (Human).